Here is a 665-residue protein sequence, read N- to C-terminus: RNA-directed RNA polymerase (665 aa).

The catalysed reaction is RNA(n) + a ribonucleoside 5'-triphosphate = RNA(n+1) + diphosphate. In terms of biological role, RNA-dependent RNA polymerase which replicates the viral genome. The chain is RNA-directed RNA polymerase from Atkinsonella hypoxylon (AhV).